A 231-amino-acid polypeptide reads, in one-letter code: Fibronectin type III domain-containing protein 4 (231 aa).

A signal peptide spans 1–40 (MPLAPPANSVETMASLMPLSPYLSPTVLLLVSCDLGFVRA). At 41–163 (DRPPSPVNVT…GLDGERPLQT (123 aa)) the chain is on the extracellular side. A Fibronectin type-III domain is found at 43-136 (PPSPVNVTVT…PRVHFRTLKG (94 aa)). N-linked (GlcNAc...) asparagine glycans are attached at residues N48 and N143. The segment at 118 to 156 (GLRGESPPGPRVHFRTLKGSDRLPSNSSSPGDITVEGLD) is disordered. The chain crosses the membrane as a helical span at residues 164–184 (GEVVIIVVVLLMWAAVIGLFC). Topologically, residues 185–231 (RQYDIIKDNDSNNNPKEKGKGPEQSPQGRPVGTTRQKKSPSINTIDV) are cytoplasmic. Positions 193-205 (NDSNNNPKEKGKG) are enriched in basic and acidic residues. Residues 193–231 (NDSNNNPKEKGKGPEQSPQGRPVGTTRQKKSPSINTIDV) are disordered.

Predominantly expressed in the liver and in the brain, including in the cortex, hypothalamus and hippocampus. Also expressed in heart, lung, kidney and testis. In the colon, expressed in the epithelium and in a subset of immune cells in lymphoid aggregates.

Its subcellular location is the membrane. The protein localises to the secreted. Has anti-inflammatory properties. In the colon, acts on macrophages to down-regulate inflammation. May suppress osteoclastogenesis and mature osteoclast resorptive function. In white adipose tissue, decreases local inflammation, via interaction with GPR116. Also required for proper systemic glucose tolerance, specifically sensitizing white adipocytes to insulin and promoting glucose uptake. The insulin sensitizing function in adipose tissue is mediated by interaction with ADGRF5/GPR116 and activation of cAMP signaling. The sequence is that of Fibronectin type III domain-containing protein 4 (Fndc4) from Mus musculus (Mouse).